The following is a 307-amino-acid chain: Transcription initiation factor IIF subunit beta (307 aa).

Positions Met1–Glu12 are enriched in basic and acidic residues. Disordered regions lie at residues Met1 to Asp22 and Val261 to Val307. Residues Asp13–Asp22 are compositionally biased toward acidic residues. Residues Leu263–Thr290 are compositionally biased toward polar residues. Positions Ala292–Val307 are enriched in acidic residues.

This sequence belongs to the TFIIF beta subunit family. As to quaternary structure, component of the fcp1/TFIIF/polII complex via interaction of tfg3 with both tfg1/TFIIF-alpha and tfg2/TFIIF-beta subunits.

The protein resides in the nucleus. Its function is as follows. TFIIF is a general transcription initiation factor that binds to RNA polymerase II and helps to recruit it to the initiation complex in collaboration with TFIIB. It promotes transcription elongation. The chain is Transcription initiation factor IIF subunit beta (tfg2) from Schizosaccharomyces pombe (strain 972 / ATCC 24843) (Fission yeast).